We begin with the raw amino-acid sequence, 161 residues long: MPSFDVVSELDWHEVTNAVDQANREITTRYDFKGVKAHYEIKDKKSVVMEAEAEPQLRQMSDILNQKLVGRGIDLKSLEKEDVVKGNMRASQAVKMKEGLETDEAKKIVKMIKDSKAKVQAQIQGDQLRVTGKKRDDLQQVMALLRGADLAQPVQFTNFRD.

It belongs to the YajQ family.

Its function is as follows. Nucleotide-binding protein. This Marinomonas sp. (strain MWYL1) protein is Nucleotide-binding protein Mmwyl1_2033.